Here is a 677-residue protein sequence, read N- to C-terminus: Methionine--tRNA ligase (677 aa).

The short motif at 15 to 25 (PYANGSIHLGH) is the 'HIGH' region element. Positions 146, 149, 159, and 162 each coordinate Zn(2+). The 'KMSKS' region signature appears at 333-337 (KMSKS). ATP is bound at residue lysine 336. The 103-residue stretch at 575–677 (DFAKVDLRVA…AGAKPGHQVK (103 aa)) folds into the tRNA-binding domain.

This sequence belongs to the class-I aminoacyl-tRNA synthetase family. MetG type 1 subfamily. Homodimer. The cofactor is Zn(2+).

Its subcellular location is the cytoplasm. It catalyses the reaction tRNA(Met) + L-methionine + ATP = L-methionyl-tRNA(Met) + AMP + diphosphate. Its function is as follows. Is required not only for elongation of protein synthesis but also for the initiation of all mRNA translation through initiator tRNA(fMet) aminoacylation. The sequence is that of Methionine--tRNA ligase from Escherichia coli O127:H6 (strain E2348/69 / EPEC).